Consider the following 421-residue polypeptide: Peroxisomal succinyl-coenzyme A thioesterase (421 aa).

S232 serves as the catalytic Charge relay system. Position 313 is an N6-succinyllysine (K313). Residues D326 and H360 each act as charge relay system in the active site. A Microbody targeting signal motif is present at residues C419–L421.

Belongs to the C/M/P thioester hydrolase family. As to expression, mainly expressed in liver and kidney. Weakly expressed in other tissues including intestine, adrenal gland and adipose tissues.

The protein localises to the peroxisome. It catalyses the reaction succinyl-CoA + H2O = succinate + CoA + H(+). It carries out the reaction glutaryl-CoA + H2O = glutarate + CoA + H(+). It functions in the pathway lipid metabolism; fatty acid metabolism. Catalyzes the hydrolysis of acyl-CoAs into free fatty acids and coenzyme A (CoASH), regulating their respective intracellular levels. In contrast to its human ortholog, functions essentially as a succinyl-CoA thioesterase with no activity with medium to long chain saturated acyl-CoAs and with a low activity toward glutaryl-CoA. The polypeptide is Peroxisomal succinyl-coenzyme A thioesterase (Acot4) (Mus musculus (Mouse)).